Here is a 245-residue protein sequence, read N- to C-terminus: DNA polymerase zeta processivity subunit (245 aa).

The HORMA domain maps to 3–203 (RWVEKWLRVY…PPKIKLTSLV (201 aa)).

Belongs to the MAD2 family. In terms of assembly, forms DNA polymerase zeta with REV3. Interacts with REV1.

It is found in the mitochondrion. Required for DNA damage induced mutagenesis. Involved in DNA repair, mitochondrial DNA repair and translesion synthesis. Has a role in the bypass of abasic (AP) sites. The protein is DNA polymerase zeta processivity subunit (REV7) of Saccharomyces cerevisiae (strain ATCC 204508 / S288c) (Baker's yeast).